Consider the following 151-residue polypeptide: Prefoldin subunit alpha (151 aa).

The disordered stretch occupies residues 120-151 (TVEEETASLEEKAQQAQQQQMQQLQQMQQEDE). The span at 133–151 (QQAQQQQMQQLQQMQQEDE) shows a compositional bias: low complexity.

The protein belongs to the prefoldin subunit alpha family. As to quaternary structure, heterohexamer of two alpha and four beta subunits.

The protein localises to the cytoplasm. Molecular chaperone capable of stabilizing a range of proteins. Seems to fulfill an ATP-independent, HSP70-like function in archaeal de novo protein folding. This Natronomonas pharaonis (strain ATCC 35678 / DSM 2160 / CIP 103997 / JCM 8858 / NBRC 14720 / NCIMB 2260 / Gabara) (Halobacterium pharaonis) protein is Prefoldin subunit alpha.